A 353-amino-acid polypeptide reads, in one-letter code: Guanidino acid hydrolase, mitochondrial (353 aa).

A mitochondrion-targeting transit peptide spans 1 to 33 (MLQLLKSSWVRSAGSGVVTWRASAGLFCPGTRQ). The interval 29 to 52 (PGTRQASDTSDTLHHPSPSSESQV) is disordered. Residues His-163 and His-188 each contribute to the Mn(2+) site. Lys-194 is modified (N6-acetyllysine). Lys-218 is subject to N6-acetyllysine; alternate. N6-succinyllysine; alternate is present on Lys-218. Asp-279 provides a ligand contact to Mn(2+).

This sequence belongs to the arginase family. Agmatinase subfamily. Mn(2+) serves as cofactor.

The protein localises to the mitochondrion. It carries out the reaction 3-guanidinopropanoate + H2O = urea + beta-alanine. The enzyme catalyses 4-guanidinobutanoate + H2O = urea + 4-aminobutanoate. The catalysed reaction is taurocyamine + H2O = urea + taurine. It catalyses the reaction L-arginine + H2O = urea + L-ornithine. It functions in the pathway nitrogen metabolism; urea cycle; L-ornithine and urea from L-arginine: step 1/1. In terms of biological role, hydrolyzes linear guanidino acids to form urea and the corresponding amines. Displays specificity for substrates having a negatively charged head group and short chains including taurocyamine, guanidino propanoic and butanoic acids. May protect cells by detoxifying potentially harmful amounts of guanidino acids. Metabolizes L-arginine with low efficiency. The protein is Guanidino acid hydrolase, mitochondrial (Agmat) of Rattus norvegicus (Rat).